Reading from the N-terminus, the 284-residue chain is D-tagatose-1,6-bisphosphate aldolase subunit GatY (284 aa).

The active-site Proton donor is the Asp82. Residues His83 and His180 each contribute to the Zn(2+) site. Gly181 is a binding site for dihydroxyacetone phosphate. Zn(2+) is bound at residue His208. Residues 209–211 and 230–233 each bind dihydroxyacetone phosphate; these read GAS and NVAT.

This sequence belongs to the class II fructose-bisphosphate aldolase family. TagBP aldolase GatY subfamily. In terms of assembly, forms a complex with GatZ. Zn(2+) serves as cofactor.

The catalysed reaction is D-tagatofuranose 1,6-bisphosphate = D-glyceraldehyde 3-phosphate + dihydroxyacetone phosphate. Its pathway is carbohydrate metabolism; D-tagatose 6-phosphate degradation; D-glyceraldehyde 3-phosphate and glycerone phosphate from D-tagatose 6-phosphate: step 2/2. Its function is as follows. Catalytic subunit of the tagatose-1,6-bisphosphate aldolase GatYZ, which catalyzes the reversible aldol condensation of dihydroxyacetone phosphate (DHAP or glycerone-phosphate) with glyceraldehyde 3-phosphate (G3P) to produce tagatose 1,6-bisphosphate (TBP). Requires GatZ subunit for full activity and stability. Is involved in the catabolism of galactitol. This chain is D-tagatose-1,6-bisphosphate aldolase subunit GatY, found in Shigella boydii serotype 4 (strain Sb227).